A 200-amino-acid chain; its full sequence is Inner membrane protein E199L (200 aa).

Asn131 carries an N-linked (GlcNAc...) asparagine; by host glycan. Residues 150–170 (INVMNHPFLTLILIILILIII) form a helical membrane-spanning segment.

This sequence belongs to the asfivirus E199L family. As to quaternary structure, interacts with host PYCR2; this interaction results in autophagy activation. In terms of processing, contains intramolecular disulfide bonds.

It is found in the virion membrane. It localises to the host membrane. In terms of biological role, essential for viral fusion with host endosomal membrane and core release. Not required for virus morphogenesis and egress. Induces complete autophagy through the interaction with and down-regulation of host PYCR2. The sequence is that of Inner membrane protein E199L from Ornithodoros (relapsing fever ticks).